The chain runs to 926 residues: Chitin synthase-like protein 2 (926 aa).

Residues 1 to 56 (MSFQNPSYINAKHRSFLQPKDTQDSQDLRNWVSHSSVDEETAYSSSTLSSSSSKSF) form a disordered region. Over residues 44-55 (SSSTLSSSSSKS) the composition is skewed to low complexity. A run of 7 helical transmembrane segments spans residues 564 to 584 (INSS…LWTT), 599 to 619 (LVFA…FLAF), 641 to 661 (LFLV…MLAM), 671 to 691 (LLFI…FCVF), 721 to 741 (LLIL…FFIF), 853 to 873 (VLVW…VFDG), and 885 to 905 (IFWS…TFIA).

Belongs to the chitin synthase family.

The protein localises to the membrane. In terms of biological role, plays a role in septum formation. Has no chitin synthase activity. This chain is Chitin synthase-like protein 2 (chs2), found in Schizosaccharomyces pombe (strain 972 / ATCC 24843) (Fission yeast).